Consider the following 300-residue polypeptide: NAD kinase (300 aa).

Catalysis depends on Asp75, which acts as the Proton acceptor. Residues 75–76 (DG), 149–150 (ND), Arg177, Asp179, 190–195 (TAYALS), Ala214, and Gln248 each bind NAD(+).

It belongs to the NAD kinase family. A divalent metal cation is required as a cofactor.

Its subcellular location is the cytoplasm. It catalyses the reaction NAD(+) + ATP = ADP + NADP(+) + H(+). Involved in the regulation of the intracellular balance of NAD and NADP, and is a key enzyme in the biosynthesis of NADP. Catalyzes specifically the phosphorylation on 2'-hydroxyl of the adenosine moiety of NAD to yield NADP. The sequence is that of NAD kinase from Paraburkholderia phytofirmans (strain DSM 17436 / LMG 22146 / PsJN) (Burkholderia phytofirmans).